We begin with the raw amino-acid sequence, 302 residues long: Dihydroorotate dehydrogenase B (NAD(+)), catalytic subunit (302 aa).

Residues S20 and 44–45 (KG) contribute to the FMN site. Substrate contacts are provided by residues K44 and 68–72 (NSVGL). FMN is bound by residues N98 and N125. N125 is a substrate binding site. The active-site Nucleophile is the C128. FMN is bound by residues K163 and I189. 190 to 191 (NT) lines the substrate pocket. FMN-binding positions include G215, 241–242 (GG), and 263–264 (GT).

It belongs to the dihydroorotate dehydrogenase family. Type 1 subfamily. In terms of assembly, heterotetramer of 2 PyrK and 2 PyrD type B subunits. FMN serves as cofactor.

The protein localises to the cytoplasm. It carries out the reaction (S)-dihydroorotate + NAD(+) = orotate + NADH + H(+). It functions in the pathway pyrimidine metabolism; UMP biosynthesis via de novo pathway; orotate from (S)-dihydroorotate (NAD(+) route): step 1/1. Its function is as follows. Catalyzes the conversion of dihydroorotate to orotate with NAD(+) as electron acceptor. The sequence is that of Dihydroorotate dehydrogenase B (NAD(+)), catalytic subunit (pyrD) from Thermoanaerobacter pseudethanolicus (strain ATCC 33223 / 39E) (Clostridium thermohydrosulfuricum).